A 269-amino-acid chain; its full sequence is Glutamate racemase (269 aa).

Substrate-binding positions include 14 to 15 and 46 to 47; these read DS and YS. The Proton donor/acceptor role is filled by C78. Residue 79–80 coordinates substrate; the sequence is NT. C189 acts as the Proton donor/acceptor in catalysis. 190–191 serves as a coordination point for substrate; it reads TH.

Belongs to the aspartate/glutamate racemases family.

It carries out the reaction L-glutamate = D-glutamate. The protein operates within cell wall biogenesis; peptidoglycan biosynthesis. Provides the (R)-glutamate required for cell wall biosynthesis. This chain is Glutamate racemase, found in Haemophilus influenzae (strain 86-028NP).